Here is a 464-residue protein sequence, read N- to C-terminus: 17,18-epoxy-17-hydroxycur-19-ene N-malonyltransferase (464 aa).

Catalysis depends on proton acceptor residues H191 and D403.

Belongs to the plant acyltransferase family. As to quaternary structure, monomer. Mainly expressed in roots.

It is found in the cytoplasm. The catalysed reaction is 17,18-epoxy-17-hydroxycur-19-ene + malonyl-CoA = prestrychnine + CoA. It functions in the pathway alkaloid biosynthesis. Malonylransferase involved in the biosynthesis of curare monoterpene indole alkaloids (MIAs), natural products such as strychnine, a neurotoxic compound used as a pesticide to control rodents, and its pharmacologically active derivatives, including brucine, used to regulate blood pressure. Curare alkaloids act as animal glycine receptor antagonists. Catalyzes the conversion of 17,18-epoxy-17-hydroxycur-19-ene (Wieland-Gumlich aldehyde) to prestrychnine, which is spontaneously converted into strychnine and isostrychnine. This Strychnos nux-vomica (Poison nut) protein is 17,18-epoxy-17-hydroxycur-19-ene N-malonyltransferase.